We begin with the raw amino-acid sequence, 141 residues long: Transcription antitermination protein NusB (141 aa).

It belongs to the NusB family.

Its function is as follows. Involved in transcription antitermination. Required for transcription of ribosomal RNA (rRNA) genes. Binds specifically to the boxA antiterminator sequence of the ribosomal RNA (rrn) operons. The sequence is that of Transcription antitermination protein NusB from Neisseria meningitidis serogroup B (strain ATCC BAA-335 / MC58).